Reading from the N-terminus, the 86-residue chain is BolA-like protein 2 (86 aa).

Met-1 is modified (N-acetylmethionine).

Belongs to the BolA/IbaG family. As to quaternary structure, interacts with GLRX3; forms a heterotrimeric complex composed by two BOLA2 molecules and one GLRX3 molecule; linked by [2Fe-2S] clusters.

The protein resides in the cytoplasm. It is found in the nucleus. Functionally, acts as a cytosolic iron-sulfur (Fe-S) cluster assembly factor that facilitates [2Fe-2S] cluster insertion into a subset of cytosolic proteins. Acts together with the monothiol glutaredoxin GLRX3. The chain is BolA-like protein 2 (BOLA2) from Homo sapiens (Human).